Here is a 305-residue protein sequence, read N- to C-terminus: Ornithine carbamoyltransferase (305 aa).

Carbamoyl phosphate-binding positions include 53–56 (STRT), glutamine 80, arginine 104, and 131–134 (HPCQ). Residues asparagine 162, aspartate 219, and 223–224 (SM) each bind L-ornithine. Carbamoyl phosphate is bound by residues 259–260 (CL) and arginine 287.

The protein belongs to the aspartate/ornithine carbamoyltransferase superfamily. OTCase family.

Its subcellular location is the cytoplasm. It catalyses the reaction carbamoyl phosphate + L-ornithine = L-citrulline + phosphate + H(+). It functions in the pathway amino-acid biosynthesis; L-arginine biosynthesis; L-arginine from L-ornithine and carbamoyl phosphate: step 1/3. In terms of biological role, reversibly catalyzes the transfer of the carbamoyl group from carbamoyl phosphate (CP) to the N(epsilon) atom of ornithine (ORN) to produce L-citrulline. This Psychrobacter cryohalolentis (strain ATCC BAA-1226 / DSM 17306 / VKM B-2378 / K5) protein is Ornithine carbamoyltransferase.